A 381-amino-acid polypeptide reads, in one-letter code: Chorismate synthase (381 aa).

Residues Arg-41 and Arg-47 each contribute to the NADP(+) site. Residues 127–129, 247–248, Gly-291, 306–310, and Arg-332 each bind FMN; these read RAS, QA, and KPIPT.

This sequence belongs to the chorismate synthase family. As to quaternary structure, homotetramer. FMNH2 is required as a cofactor.

The catalysed reaction is 5-O-(1-carboxyvinyl)-3-phosphoshikimate = chorismate + phosphate. The protein operates within metabolic intermediate biosynthesis; chorismate biosynthesis; chorismate from D-erythrose 4-phosphate and phosphoenolpyruvate: step 7/7. Catalyzes the anti-1,4-elimination of the C-3 phosphate and the C-6 proR hydrogen from 5-enolpyruvylshikimate-3-phosphate (EPSP) to yield chorismate, which is the branch point compound that serves as the starting substrate for the three terminal pathways of aromatic amino acid biosynthesis. This reaction introduces a second double bond into the aromatic ring system. In Anaeromyxobacter dehalogenans (strain 2CP-C), this protein is Chorismate synthase.